The chain runs to 98 residues: uncharacterized protein (98 aa).

Residues Arg19–Lys31 are compositionally biased toward basic residues. A disordered region spans residues Arg19–Ser47.

Belongs to the lymphocryptovirus BNLF2b family.

This is an uncharacterized protein from Homo sapiens (Human).